The primary structure comprises 334 residues: Beta-glucanase (334 aa).

The signal sequence occupies residues 1–27 (MKNRVISLLMASLLLVLSVIVAPFYKA). The GH16 domain maps to 28–248 (EAATVVNTPF…YVKYYPNGVP (221 aa)). Glu-136 acts as the Nucleophile in catalysis. Catalysis depends on Glu-140, which acts as the Proton donor. The Dockerin domain maps to 267-334 (NLPLKGDVNG…RYLIRAIPSL (68 aa)).

Belongs to the glycosyl hydrolase 16 family. As to quaternary structure, may form part of a multienzyme complex (cellulosome).

The enzyme catalyses Hydrolysis of (1-&gt;4)-beta-D-glucosidic linkages in beta-D-glucans containing (1-&gt;3)- and (1-&gt;4)-bonds.. The chain is Beta-glucanase (licB) from Acetivibrio thermocellus (strain ATCC 27405 / DSM 1237 / JCM 9322 / NBRC 103400 / NCIMB 10682 / NRRL B-4536 / VPI 7372) (Clostridium thermocellum).